Consider the following 81-residue polypeptide: Photosystem I iron-sulfur center (81 aa).

4Fe-4S ferredoxin-type domains follow at residues 2–31 (SHSVKIYDTCIGCTQCVRACPLDVLEMVPW) and 37–68 (GQIASSPRTEDCIGCKRCETACPTDFLSVRVY). 8 residues coordinate [4Fe-4S] cluster: C11, C14, C17, C21, C48, C51, C54, and C58.

As to quaternary structure, the cyanobacterial PSI reaction center is composed of one copy each of PsaA,B,C,D,E,F,I,J,K,L,M and X, and forms trimeric complexes. [4Fe-4S] cluster serves as cofactor.

It is found in the cellular thylakoid membrane. It carries out the reaction reduced [plastocyanin] + hnu + oxidized [2Fe-2S]-[ferredoxin] = oxidized [plastocyanin] + reduced [2Fe-2S]-[ferredoxin]. Its function is as follows. Apoprotein for the two 4Fe-4S centers FA and FB of photosystem I (PSI); essential for photochemical activity. FB is the terminal electron acceptor of PSI, donating electrons to ferredoxin. The C-terminus interacts with PsaA/B/D and helps assemble the protein into the PSI complex. Required for binding of PsaD and PsaE to PSI. PSI is a plastocyanin/cytochrome c6-ferredoxin oxidoreductase, converting photonic excitation into a charge separation, which transfers an electron from the donor P700 chlorophyll pair to the spectroscopically characterized acceptors A0, A1, FX, FA and FB in turn. This Trichodesmium erythraeum (strain IMS101) protein is Photosystem I iron-sulfur center.